Reading from the N-terminus, the 239-residue chain is Tumor necrosis factor ligand superfamily member 14 (239 aa).

Topologically, residues 1–37 (MESVVQPSVFVVDGQTDIPFRRLEQNHRRRRCGTVQV) are cytoplasmic. The chain crosses the membrane as a helical; Signal-anchor for type II membrane protein span at residues 38 to 58 (SLALVLLLGAGLATQGWFLLR). Topologically, residues 59 to 239 (LHQRLGDIVA…TRSYFGAFMV (181 aa)) are extracellular. The region spanning 92–239 (PAAHLTGANA…TRSYFGAFMV (148 aa)) is the THD domain. The N-linked (GlcNAc...) asparagine glycan is linked to Asn100. Residues Cys152 and Cys187 are joined by a disulfide bond. Asn191 is a glycosylation site (N-linked (GlcNAc...) asparagine).

Belongs to the tumor necrosis factor family. Homotrimer. Interacts with TNFRSF14. Post-translationally, the soluble form derives from the membrane form by proteolytic processing.

Its subcellular location is the cell membrane. It is found in the secreted. In terms of biological role, cytokine that binds to TNFRSF3/LTBR. Binding to the decoy receptor TNFRSF6B modulates its effects. Activates NFKB and stimulates the proliferation of T-cells. Acts as a ligand for TNFRSF14/HVEM. Upon binding to TNFRSF14/HVEM, delivers costimulatory signals to T cells, leading to T cell proliferation and IFNG production. This chain is Tumor necrosis factor ligand superfamily member 14 (Tnfsf14), found in Mus musculus (Mouse).